A 365-amino-acid chain; its full sequence is 3-dehydroquinate synthase (365 aa).

Residues 69–74 (DGEAHK), 103–107 (GVIGD), 127–128 (TT), lysine 140, and lysine 149 each bind NAD(+). Zn(2+) is bound by residues glutamate 182, histidine 245, and histidine 262.

Belongs to the sugar phosphate cyclases superfamily. Dehydroquinate synthase family. The cofactor is NAD(+). Co(2+) serves as cofactor. Zn(2+) is required as a cofactor.

It localises to the cytoplasm. It carries out the reaction 7-phospho-2-dehydro-3-deoxy-D-arabino-heptonate = 3-dehydroquinate + phosphate. The protein operates within metabolic intermediate biosynthesis; chorismate biosynthesis; chorismate from D-erythrose 4-phosphate and phosphoenolpyruvate: step 2/7. Catalyzes the conversion of 3-deoxy-D-arabino-heptulosonate 7-phosphate (DAHP) to dehydroquinate (DHQ). This Pseudomonas putida (strain ATCC 47054 / DSM 6125 / CFBP 8728 / NCIMB 11950 / KT2440) protein is 3-dehydroquinate synthase.